Reading from the N-terminus, the 123-residue chain is Large ribosomal subunit protein uL14 (123 aa).

Belongs to the universal ribosomal protein uL14 family. Part of the 50S ribosomal subunit. Forms a cluster with proteins L3 and L19. In the 70S ribosome, L14 and L19 interact and together make contacts with the 16S rRNA in bridges B5 and B8.

Functionally, binds to 23S rRNA. Forms part of two intersubunit bridges in the 70S ribosome. This chain is Large ribosomal subunit protein uL14, found in Chromohalobacter salexigens (strain ATCC BAA-138 / DSM 3043 / CIP 106854 / NCIMB 13768 / 1H11).